The sequence spans 184 residues: Elongation factor P (184 aa).

It belongs to the elongation factor P family.

The protein localises to the cytoplasm. Its pathway is protein biosynthesis; polypeptide chain elongation. In terms of biological role, involved in peptide bond synthesis. Stimulates efficient translation and peptide-bond synthesis on native or reconstituted 70S ribosomes in vitro. Probably functions indirectly by altering the affinity of the ribosome for aminoacyl-tRNA, thus increasing their reactivity as acceptors for peptidyl transferase. The protein is Elongation factor P of Leptothrix cholodnii (strain ATCC 51168 / LMG 8142 / SP-6) (Leptothrix discophora (strain SP-6)).